A 125-amino-acid chain; its full sequence is Holo-[acyl-carrier-protein] synthase (125 aa).

Residues Asp8 and Glu57 each contribute to the Mg(2+) site.

It belongs to the P-Pant transferase superfamily. AcpS family. Requires Mg(2+) as cofactor.

It localises to the cytoplasm. The catalysed reaction is apo-[ACP] + CoA = holo-[ACP] + adenosine 3',5'-bisphosphate + H(+). Functionally, transfers the 4'-phosphopantetheine moiety from coenzyme A to a Ser of acyl-carrier-protein. This is Holo-[acyl-carrier-protein] synthase from Solibacter usitatus (strain Ellin6076).